The primary structure comprises 205 residues: Transcriptional regulatory protein PdtaR (205 aa).

The region spanning 15-129 is the Response regulatory domain; sequence RVLIAEDEAL…DLIPAIELAV (115 aa). Asp-65 is subject to 4-aspartylphosphate. Positions 135–196 constitute an ANTAR domain; the sequence is ITALEGEVAT…TMKRVAEVVL (62 aa).

Phosphorylated and activated by PdtaS.

It is found in the cytoplasm. In terms of biological role, member of the two-component regulatory system PdtaR/PdtaS. This two-component system plays an essential role in mycobacterial adaptation to poor nutrient conditions. PdtaR probably acts at the level of transcriptional antitermination rather than transcriptional initiation. Functionally, in addition, the PdtaR/PdtaS two-component system controls copper and nitric oxide (NO) resistance downstream of the intramembrane protease Rip1. This coupled Rip1/PdtaS/PdtaR circuit controls NO resistance and acute lung infection in mice by relieving PdtaR/PdtaS-mediated repression of isonitrile chalkophore biosynthesis. Two signals are required to fully inactivate the PdtaR/PdtaS system and mediate NO resistance: a cytoplasmic inhibitory signal through the PdtaS kinase mediated by direct sensing of NO and the production of PPE1-5', an NO-induced small RNA, to sequester PdtaR. The sequence is that of Transcriptional regulatory protein PdtaR (pdtaR) from Mycobacterium tuberculosis (strain CDC 1551 / Oshkosh).